The following is a 337-amino-acid chain: Large ribosomal subunit protein uL3 (337 aa).

The protein belongs to the universal ribosomal protein uL3 family. Part of the 50S ribosomal subunit. Forms a cluster with proteins L14 and L24e.

Functionally, one of the primary rRNA binding proteins, it binds directly near the 3'-end of the 23S rRNA, where it nucleates assembly of the 50S subunit. This is Large ribosomal subunit protein uL3 from Methanosphaerula palustris (strain ATCC BAA-1556 / DSM 19958 / E1-9c).